We begin with the raw amino-acid sequence, 287 residues long: Undecaprenyl-diphosphatase (287 aa).

Transmembrane regions (helical) follow at residues 1 to 21 (MALW…FLPV), 49 to 69 (MILF…VVFA), 101 to 121 (LFLL…TLKA), 126 to 146 (VFAN…LLFW), 160 to 180 (TGVG…MPGL), 203 to 223 (YSFF…AIEV), 232 to 252 (VSVA…IVSL), and 267 to 287 (FSFY…DLPI).

This sequence belongs to the UppP family.

Its subcellular location is the cell inner membrane. It carries out the reaction di-trans,octa-cis-undecaprenyl diphosphate + H2O = di-trans,octa-cis-undecaprenyl phosphate + phosphate + H(+). Functionally, catalyzes the dephosphorylation of undecaprenyl diphosphate (UPP). Confers resistance to bacitracin. This Halorhodospira halophila (strain DSM 244 / SL1) (Ectothiorhodospira halophila (strain DSM 244 / SL1)) protein is Undecaprenyl-diphosphatase.